Here is a 150-residue protein sequence, read N- to C-terminus: Ribosome maturation factor RimP (150 aa).

This sequence belongs to the RimP family.

The protein localises to the cytoplasm. Functionally, required for maturation of 30S ribosomal subunits. This Acidithiobacillus ferrooxidans (strain ATCC 23270 / DSM 14882 / CIP 104768 / NCIMB 8455) (Ferrobacillus ferrooxidans (strain ATCC 23270)) protein is Ribosome maturation factor RimP.